A 446-amino-acid polypeptide reads, in one-letter code: Glutamate-1-semialdehyde 2,1-aminomutase (446 aa).

N6-(pyridoxal phosphate)lysine is present on lysine 278.

The protein belongs to the class-III pyridoxal-phosphate-dependent aminotransferase family. HemL subfamily. As to quaternary structure, homodimer. The cofactor is pyridoxal 5'-phosphate.

Its subcellular location is the cytoplasm. The catalysed reaction is (S)-4-amino-5-oxopentanoate = 5-aminolevulinate. It participates in porphyrin-containing compound metabolism; protoporphyrin-IX biosynthesis; 5-aminolevulinate from L-glutamyl-tRNA(Glu): step 2/2. The polypeptide is Glutamate-1-semialdehyde 2,1-aminomutase (Deinococcus geothermalis (strain DSM 11300 / CIP 105573 / AG-3a)).